Here is a 413-residue protein sequence, read N- to C-terminus: uncharacterized protein (413 aa).

The region spanning 2 to 129 is the Response regulatory domain; sequence RILIVDDENT…KTTWKLRLME (128 aa). Asp-54 is subject to 4-aspartylphosphate.

This is an uncharacterized protein from Sinorhizobium fredii (strain NBRC 101917 / NGR234).